We begin with the raw amino-acid sequence, 294 residues long: MSSSFQTIALIGKHKNPGIVTPLSSLARYLQSRNLTVLLDNLTAASMDEDSYPAVAMEEIGSRADLAIVLGGDGTMLNIARKLAPFNVPLVGINQGRLGFLTDLSIVTMQQTLGAILEGRYITEQRMLLYAEVARSNVTTFGGLALNDVAVNRGIGGNMIEFEVRINDEYVCLLRSDGLIVATPTGSTAYALSAGGPILHPSLDLVALVPVSPHTLSNRPIVVGPDAAVEILMQRTAVARVHFDSHSHFDLEENDKVMVRRSPHRVTLLHPSDHSYYRMLREKLGWSGLPRNPT.

Residue Asp-73 is the Proton acceptor of the active site. Residues 73–74 (DG), 147–148 (ND), Arg-175, Asp-177, and 188–193 (TAYALS) each bind NAD(+).

Belongs to the NAD kinase family. A divalent metal cation serves as cofactor.

It is found in the cytoplasm. The enzyme catalyses NAD(+) + ATP = ADP + NADP(+) + H(+). Involved in the regulation of the intracellular balance of NAD and NADP, and is a key enzyme in the biosynthesis of NADP. Catalyzes specifically the phosphorylation on 2'-hydroxyl of the adenosine moiety of NAD to yield NADP. This Nitrosospira multiformis (strain ATCC 25196 / NCIMB 11849 / C 71) protein is NAD kinase.